The primary structure comprises 283 residues: uncharacterized protein (283 aa).

A signal peptide spans 1-21 (MKLKLKFLLISLLGSSLLLSA). The N-palmitoyl cysteine moiety is linked to residue Cys-22. Residue Cys-22 is the site of S-diacylglycerol cysteine attachment.

It belongs to the MG439/MG440 family.

It localises to the cell membrane. This is an uncharacterized protein from Mycoplasma pneumoniae (strain ATCC 29342 / M129 / Subtype 1) (Mycoplasmoides pneumoniae).